Consider the following 314-residue polypeptide: Putative SET domain-containing protein L222 (314 aa).

An SET domain is found at 23–172 (EYIQVIYQNP…ANTEITISYG (150 aa)).

This sequence belongs to the class V-like SAM-binding methyltransferase superfamily.

This chain is Putative SET domain-containing protein L222, found in Acanthamoeba polyphaga mimivirus (APMV).